Consider the following 1166-residue polypeptide: ATP-dependent helicase/deoxyribonuclease subunit B (1166 aa).

Residues 1–278 enclose the UvrD-like helicase ATP-binding domain; it reads MGAEFLVGRS…LNLDITYKEL (278 aa). ATP contacts are provided by serine 10, glycine 11, lysine 14, threonine 15, lysine 16, threonine 236, and arginine 283. The UvrD-like helicase C-terminal domain maps to 281–586; that stretch reads TERHTKTPEL…TFSLIPPALD (306 aa). Residues cysteine 801, cysteine 1121, cysteine 1124, and cysteine 1130 each contribute to the [4Fe-4S] cluster site.

The protein belongs to the helicase family. AddB/RexB type 1 subfamily. As to quaternary structure, heterodimer of AddA and AddB. It depends on At low magnesium concentrations there is no nuclease activity, but helicase activity is unaffected. as a cofactor. Mg(2+) is required as a cofactor. The cofactor is [4Fe-4S] cluster.

In terms of biological role, the heterodimer acts both as a highly processive, ATP-dependent DNA helicase and as an ATP-dependent single-stranded exonuclease, acting in both directions. Recognizes the B.subtilis Chi site (5'-AGCGG-3') which transforms the enzyme from a helicase which degrades both DNA strands to one with only 5' to 3' exonuclease activity. This generates a double-stranded DNA with a protruding 3'-terminated single-stranded tail suitable for the initiation of homologous recombination (Chi fragment). The AddB nuclease domain is not required for Chi fragment generation but for recognition of the Chi site; this subunit has 5' -&gt; 3' nuclease activity but no helicase activity. The helicase activity of isolated AddA acts on 3'-tailed substrate and requires AddB to bind to blunt-ended DNA. RecA thread formation during DNA double-strand break repair requires RecJ or AddAB. The polypeptide is ATP-dependent helicase/deoxyribonuclease subunit B (Bacillus subtilis (strain 168)).